The chain runs to 1218 residues: Formin-A (1218 aa).

Residues 1–108 enclose the C2 domain; that stretch reads MADKLYQIKL…ILGEACNYSV (108 aa). The GBD/FH3 domain maps to 139 to 539; it reads EEKKRHDEIQ…QISLRDKNIG (401 aa). The stretch at 563-638 forms a coiled coil; the sequence is LKSQIESLKK…QLKLTQGTAK (76 aa). The tract at residues 634 to 762 is disordered; it reads QGTAKPDSAA…KAAAPPRKEV (129 aa). Residues 649–747 show a composition bias toward pro residues; that stretch reads APPPPPPPMT…FGKGPPPPPG (99 aa). Residues 652-737 enclose the FH1 domain; the sequence is PPPPPMTGGG…AGGPPPPPPP (86 aa). The region spanning 759–1155 is the FH2 domain; sequence RKEVPVPALK…IAKREAAKKL (397 aa). The stretch at 1034–1061 forms a coiled coil; that stretch reads SLSQVQAEVATLRKEFVQVQKSIETLNS. 2 disordered regions span residues 1153–1179 and 1198–1218; these read KKLK…TVEV and KNRR…PIDL. The DAD domain occupies 1174–1209; that stretch reads GETVEVKESVVDDLLDTIASGDAFKNRRRRARKTDQ.

Belongs to the formin homology family. Diaphanous subfamily. As to quaternary structure, interacts (via GBD/FH3 domain) with activated Rho-GTPases.

Functionally, formins play an important role in the nucleation of actin and the formation of linear actin filaments. The sequence is that of Formin-A (forA) from Dictyostelium discoideum (Social amoeba).